A 164-amino-acid chain; its full sequence is Protein-export protein SecB (164 aa).

Basic and acidic residues predominate over residues 1 to 12 (MPDKDEITHDAQ). The disordered stretch occupies residues 1-22 (MPDKDEITHDAQSENEESLPLA).

Belongs to the SecB family. As to quaternary structure, homotetramer, a dimer of dimers. One homotetramer interacts with 1 SecA dimer.

It is found in the cytoplasm. In terms of biological role, one of the proteins required for the normal export of preproteins out of the cell cytoplasm. It is a molecular chaperone that binds to a subset of precursor proteins, maintaining them in a translocation-competent state. It also specifically binds to its receptor SecA. This is Protein-export protein SecB from Neorickettsia sennetsu (strain ATCC VR-367 / Miyayama) (Ehrlichia sennetsu).